The following is a 459-amino-acid chain: F-box protein At1g47340 (459 aa).

An F-box domain is found at 31–76 (FMVSVSLPKELILEILKRLPAKSVKRFHCVSKQWASMLSCPHFREL). The interval 434–459 (AKIEWEEEEEEDEDEDQEKEEEDQWS) is disordered. The span at 438–459 (WEEEEEEDEDEDQEKEEEDQWS) shows a compositional bias: acidic residues.

This chain is F-box protein At1g47340, found in Arabidopsis thaliana (Mouse-ear cress).